Here is a 545-residue protein sequence, read N- to C-terminus: ATP synthase subunit alpha (545 aa).

An ATP-binding site is contributed by 173–180; sequence GDRQTGKS.

Belongs to the ATPase alpha/beta chains family. F-type ATPases have 2 components, CF(1) - the catalytic core - and CF(0) - the membrane proton channel. CF(1) has five subunits: alpha(3), beta(3), gamma(1), delta(1), epsilon(1). CF(0) has three main subunits: a(1), b(2) and c(9-12). The alpha and beta chains form an alternating ring which encloses part of the gamma chain. CF(1) is attached to CF(0) by a central stalk formed by the gamma and epsilon chains, while a peripheral stalk is formed by the delta and b chains.

It is found in the cell membrane. The catalysed reaction is ATP + H2O + 4 H(+)(in) = ADP + phosphate + 5 H(+)(out). Its function is as follows. Produces ATP from ADP in the presence of a proton gradient across the membrane. The alpha chain is a regulatory subunit. In Pseudarthrobacter chlorophenolicus (strain ATCC 700700 / DSM 12829 / CIP 107037 / JCM 12360 / KCTC 9906 / NCIMB 13794 / A6) (Arthrobacter chlorophenolicus), this protein is ATP synthase subunit alpha.